The sequence spans 306 residues: MNTLGHQYDNSLVSNAFGFLRLPLNFMPYDSDAEWVITGIPFDMATSGRSGSRFGPAAIRQVSTNLAWEGNRFPWNFDMRKRLNVVDCGDLVYAFGDAREMSEKLQAHAEKLLAAGKRMLSFGGDHFVTLPLLRAHAKHFGKMALVHFDAHTDTYANGCEFDHGTMFYTAPNEGLIDPTRSVQIGIRTEFDKDNGFTVLDAPQVNDRTVDDVVAQVKQIVGDMPVYLTFDIDCLDPAFAPGTGTPVIGGLTSDRALKLLRGIQDLNIVGMDIVEVAPAYDQSDITALAAATLALEMLYIQAAKKGE.

Positions 126, 149, 151, 153, 230, and 232 each coordinate Mn(2+).

The protein belongs to the arginase family. Agmatinase subfamily. The cofactor is Mn(2+).

It catalyses the reaction agmatine + H2O = urea + putrescine. Its pathway is amine and polyamine biosynthesis; putrescine biosynthesis via agmatine pathway; putrescine from agmatine: step 1/1. Its function is as follows. Catalyzes the formation of putrescine from agmatine. This Cronobacter sakazakii (strain ATCC BAA-894) (Enterobacter sakazakii) protein is Agmatinase.